The chain runs to 330 residues: Small ribosomal subunit protein mS35 (330 aa).

Positions 50–73 (AAGKGVRGQMKPRRQAGEPRTERM) are disordered. Positions 64–73 (QAGEPRTERM) are enriched in basic and acidic residues.

This sequence belongs to the mitochondrion-specific ribosomal protein mS35 family. Component of the mitochondrial ribosome small subunit (28S) which comprises a 12S rRNA and about 30 distinct proteins.

Its subcellular location is the mitochondrion. The protein is Small ribosomal subunit protein mS35 (mrps35) of Danio rerio (Zebrafish).